The chain runs to 184 residues: MNLSSLRPAKGSVRNKKRVGRGQGSGNGTTAGKGNKGQQARSGYKRPIIEGGQVPVYRRLPKFGFTSRSRKTITTINLLQIEQWLEQGVVSNELTVQDFKTLLHASNTDYFKVLGAGEVTQPITITAHFFSKSAEEKIAAAGGKTIIAFRTLAEAVNIKGLPIEEALLKEKVKLVKVKKAKPTA.

Residues 1 to 45 form a disordered region; it reads MNLSSLRPAKGSVRNKKRVGRGQGSGNGTTAGKGNKGQQARSGYK. Residues 21 to 35 show a composition bias toward gly residues; it reads RGQGSGNGTTAGKGN.

This sequence belongs to the universal ribosomal protein uL15 family. Part of the 50S ribosomal subunit.

Binds to the 23S rRNA. This Chlorobium chlorochromatii (strain CaD3) protein is Large ribosomal subunit protein uL15.